Here is a 125-residue protein sequence, read N- to C-terminus: Large ribosomal subunit protein bL20 (125 aa).

This sequence belongs to the bacterial ribosomal protein bL20 family.

Its function is as follows. Binds directly to 23S ribosomal RNA and is necessary for the in vitro assembly process of the 50S ribosomal subunit. It is not involved in the protein synthesizing functions of that subunit. The protein is Large ribosomal subunit protein bL20 of Rhodospirillum rubrum (strain ATCC 11170 / ATH 1.1.1 / DSM 467 / LMG 4362 / NCIMB 8255 / S1).